Here is a 273-residue protein sequence, read N- to C-terminus: NH(3)-dependent NAD(+) synthetase (273 aa).

ATP is bound at residue 47 to 54; that stretch reads GISGGQDS. D53 is a binding site for Mg(2+). Residue R139 coordinates deamido-NAD(+). ATP is bound at residue T159. E164 contacts Mg(2+). Residues K172 and D179 each coordinate deamido-NAD(+). Residues K188 and T210 each coordinate ATP. 259–260 provides a ligand contact to deamido-NAD(+); sequence HK.

Belongs to the NAD synthetase family. Homodimer.

The enzyme catalyses deamido-NAD(+) + NH4(+) + ATP = AMP + diphosphate + NAD(+) + H(+). Its pathway is cofactor biosynthesis; NAD(+) biosynthesis; NAD(+) from deamido-NAD(+) (ammonia route): step 1/1. Functionally, catalyzes the ATP-dependent amidation of deamido-NAD to form NAD. Uses ammonia as a nitrogen source. The protein is NH(3)-dependent NAD(+) synthetase of Staphylococcus aureus (strain bovine RF122 / ET3-1).